The following is a 576-amino-acid chain: Arginine--tRNA ligase (576 aa).

A 'HIGH' region motif is present at residues P121 to H131.

It belongs to the class-I aminoacyl-tRNA synthetase family. Monomer.

Its subcellular location is the cytoplasm. The catalysed reaction is tRNA(Arg) + L-arginine + ATP = L-arginyl-tRNA(Arg) + AMP + diphosphate. This is Arginine--tRNA ligase from Alteromonas mediterranea (strain DSM 17117 / CIP 110805 / LMG 28347 / Deep ecotype).